A 258-amino-acid chain; its full sequence is Ribosomal RNA small subunit methyltransferase J (258 aa).

S-adenosyl-L-methionine is bound by residues Glu-123 to Arg-124 and Asp-177. Positions Ile-232–Ala-258 are disordered. The segment covering His-239 to Pro-252 has biased composition (basic and acidic residues).

Belongs to the methyltransferase superfamily. RsmJ family.

The protein resides in the cytoplasm. The enzyme catalyses guanosine(1516) in 16S rRNA + S-adenosyl-L-methionine = N(2)-methylguanosine(1516) in 16S rRNA + S-adenosyl-L-homocysteine + H(+). Functionally, specifically methylates the guanosine in position 1516 of 16S rRNA. This is Ribosomal RNA small subunit methyltransferase J from Pseudomonas putida (strain W619).